The chain runs to 118 residues: Small ribosomal subunit protein uS13 (118 aa).

The tract at residues 94–118 (SLPLRGQRTKTNARTRKGPRKAIKK) is disordered.

It belongs to the universal ribosomal protein uS13 family. As to quaternary structure, part of the 30S ribosomal subunit. Forms a loose heterodimer with protein S19. Forms two bridges to the 50S subunit in the 70S ribosome.

Its function is as follows. Located at the top of the head of the 30S subunit, it contacts several helices of the 16S rRNA. In the 70S ribosome it contacts the 23S rRNA (bridge B1a) and protein L5 of the 50S subunit (bridge B1b), connecting the 2 subunits; these bridges are implicated in subunit movement. Contacts the tRNAs in the A and P-sites. This chain is Small ribosomal subunit protein uS13, found in Pseudoalteromonas atlantica (strain T6c / ATCC BAA-1087).